A 311-amino-acid polypeptide reads, in one-letter code: Transcription factor MafB (311 aa).

Disordered stretches follow at residues 35-78 (PLGR…PTEQ) and 150-199 (EDLA…EDRF). A compositionally biased stretch (low complexity) spans 54 to 76 (SVSSTPISTPCSSVPSSPSFSPT). The segment covering 157-167 (HPHHHHHHHHQ) has biased composition (basic residues). Positions 168-194 (ASPTPSTSSSSSQQLQTSHQQHPPSSS) are enriched in low complexity. The basic motif stretch occupies residues 226–251 (RLKQKRRTLKNRGYAQSCRYKRVQQK). The bZIP domain occupies 226-289 (RLKQKRRTLK…DAYKLKCEKL (64 aa)). The interval 254-275 (LENEKTQLIQQVEQLKQEVTRL) is leucine-zipper.

This sequence belongs to the bZIP family. Maf subfamily. In terms of assembly, homodimer or heterodimer with other bHLH-Zip transcription factors. Binds DNA as a homodimer or heterodimer. Self-associates; the interaction requires the intact MAFB leucine-zipper domain. Interacts with FOS, HOXD12 and PRRX1. As to expression, expressed in brain, thymus, gut, lung, mesenterium, spleen, kidney, ovary and bursa.

The protein localises to the nucleus. In terms of biological role, acts as a transcriptional activator or repressor. Positively regulates the expression of alpha-A crystallin genes during lens fiber cell differentiation. Binds to Maf recognition elements (MARE). The sequence is that of Transcription factor MafB (MAFB) from Gallus gallus (Chicken).